The following is a 353-amino-acid chain: S-adenosylmethionine:tRNA ribosyltransferase-isomerase (353 aa).

This sequence belongs to the QueA family. As to quaternary structure, monomer.

The protein resides in the cytoplasm. The catalysed reaction is 7-aminomethyl-7-carbaguanosine(34) in tRNA + S-adenosyl-L-methionine = epoxyqueuosine(34) in tRNA + adenine + L-methionine + 2 H(+). The protein operates within tRNA modification; tRNA-queuosine biosynthesis. In terms of biological role, transfers and isomerizes the ribose moiety from AdoMet to the 7-aminomethyl group of 7-deazaguanine (preQ1-tRNA) to give epoxyqueuosine (oQ-tRNA). The protein is S-adenosylmethionine:tRNA ribosyltransferase-isomerase of Maricaulis maris (strain MCS10) (Caulobacter maris).